A 295-amino-acid chain; its full sequence is Small ribosomal subunit protein uS2 (295 aa).

Residues 273-295 (WAASSAPAAETLADPAADPSVKW) form a disordered region. Low complexity predominate over residues 274–295 (AASSAPAAETLADPAADPSVKW).

This sequence belongs to the universal ribosomal protein uS2 family. Component of the small ribosomal subunit. Mature ribosomes consist of a small (40S) and a large (60S) subunit. The 40S subunit contains about 33 different proteins and 1 molecule of RNA (18S). The 60S subunit contains about 49 different proteins and 3 molecules of RNA (25S, 5.8S and 5S). Interacts with RPS21.

It localises to the cytoplasm. Its function is as follows. Required for the assembly and/or stability of the 40S ribosomal subunit. Required for the processing of the 20S rRNA-precursor to mature 18S rRNA in a late step of the maturation of 40S ribosomal subunits. The polypeptide is Small ribosomal subunit protein uS2 (Paracoccidioides lutzii (strain ATCC MYA-826 / Pb01) (Paracoccidioides brasiliensis)).